The sequence spans 293 residues: EID1-like F-box protein 1 (293 aa).

One can recognise an F-box domain in the interval 16–68; it reads QCTKGHLNEDVLLLVFQHLNWNPKLVATLSCVCRWFDDFAKRVLWKEFCKTRA. Residues 245 to 293 form a disordered region; that stretch reads AIPSEDNNHTEKKQDNGFPRENVLKRRNSLLGGSENGPPPQKRLTNPNQ. Basic and acidic residues predominate over residues 250-259; that stretch reads DNNHTEKKQD.

In Arabidopsis thaliana (Mouse-ear cress), this protein is EID1-like F-box protein 1 (EDL1).